We begin with the raw amino-acid sequence, 89 residues long: Small ribosomal subunit protein uS15 (89 aa).

This sequence belongs to the universal ribosomal protein uS15 family. In terms of assembly, part of the 30S ribosomal subunit. Forms a bridge to the 50S subunit in the 70S ribosome, contacting the 23S rRNA.

Its function is as follows. One of the primary rRNA binding proteins, it binds directly to 16S rRNA where it helps nucleate assembly of the platform of the 30S subunit by binding and bridging several RNA helices of the 16S rRNA. Forms an intersubunit bridge (bridge B4) with the 23S rRNA of the 50S subunit in the ribosome. This chain is Small ribosomal subunit protein uS15, found in Synechococcus elongatus (strain ATCC 33912 / PCC 7942 / FACHB-805) (Anacystis nidulans R2).